The following is a 1012-amino-acid chain: Axonemal dynein light chain domain-containing protein 1 (1012 aa).

The segment covering 1-17 (MSLPKTPSTPLNSTSTS) has biased composition (low complexity). A disordered region spans residues 1–34 (MSLPKTPSTPLNSTSTSESKKLKVSVAKEGTRGL). Coiled-coil stretches lie at residues 317 to 402 (QRIL…IWSS), 447 to 486 (EDLALLQKLTQKWRNLVNKLKQEVEQMEESTSETLKIVKD), and 572 to 597 (SERQYMEEIIKNIQKLYKEYEIRING). A compositionally biased stretch (acidic residues) spans 841 to 854 (PEIDESFKEDEEES). Disordered stretches follow at residues 841–879 (PEIDESFKEDEEESKEDRKLQEENKERAEEQPSTSTEKE) and 963–1012 (LEEL…KKGH). 2 stretches are compositionally biased toward basic and acidic residues: residues 855 to 879 (KEDRKLQEENKERAEEQPSTSTEKE) and 963 to 987 (LEELVMTSRKESKEEKENQDEREVK). The segment covering 988-997 (EEEEQQEEEE) has biased composition (acidic residues).

As to expression, highly expressed in testis. Highly expressed in the round and late spermatids.

It localises to the cytoplasm. Functionally, may be essential for spermiogenesis and male fertility probably by regulating the manchette dynamics, spermatid head shaping and sperm flagellum assembly. The polypeptide is Axonemal dynein light chain domain-containing protein 1 (Homo sapiens (Human)).